The primary structure comprises 186 residues: Crossover junction endodeoxyribonuclease RuvC (186 aa).

Active-site residues include D14, E73, and D145. D14, E73, and D145 together coordinate Mg(2+). The tract at residues 162 to 186 is disordered; that stretch reads GRSLPPSRGRRRSGSRQRWRDYRPS. A compositionally biased stretch (basic residues) spans 169–178; it reads RGRRRSGSRQ.

The protein belongs to the RuvC family. Homodimer which binds Holliday junction (HJ) DNA. The HJ becomes 2-fold symmetrical on binding to RuvC with unstacked arms; it has a different conformation from HJ DNA in complex with RuvA. In the full resolvosome a probable DNA-RuvA(4)-RuvB(12)-RuvC(2) complex forms which resolves the HJ. Mg(2+) serves as cofactor.

Its subcellular location is the cytoplasm. It catalyses the reaction Endonucleolytic cleavage at a junction such as a reciprocal single-stranded crossover between two homologous DNA duplexes (Holliday junction).. In terms of biological role, the RuvA-RuvB-RuvC complex processes Holliday junction (HJ) DNA during genetic recombination and DNA repair. Endonuclease that resolves HJ intermediates. Cleaves cruciform DNA by making single-stranded nicks across the HJ at symmetrical positions within the homologous arms, yielding a 5'-phosphate and a 3'-hydroxyl group; requires a central core of homology in the junction. The consensus cleavage sequence is 5'-(A/T)TT(C/G)-3'. Cleavage occurs on the 3'-side of the TT dinucleotide at the point of strand exchange. HJ branch migration catalyzed by RuvA-RuvB allows RuvC to scan DNA until it finds its consensus sequence, where it cleaves and resolves the cruciform DNA. In Chromohalobacter salexigens (strain ATCC BAA-138 / DSM 3043 / CIP 106854 / NCIMB 13768 / 1H11), this protein is Crossover junction endodeoxyribonuclease RuvC.